Reading from the N-terminus, the 549-residue chain is Dihydroxy-acid dehydratase (549 aa).

Residue Asp78 participates in Mg(2+) binding. Cys119 is a binding site for [2Fe-2S] cluster. Mg(2+)-binding residues include Asp120 and Lys121. At Lys121 the chain carries N6-carboxylysine. Residue Cys191 participates in [2Fe-2S] cluster binding. Mg(2+) is bound at residue Glu441. Catalysis depends on Ser466, which acts as the Proton acceptor.

The protein belongs to the IlvD/Edd family. Homodimer. [2Fe-2S] cluster is required as a cofactor. Mg(2+) serves as cofactor.

The enzyme catalyses (2R)-2,3-dihydroxy-3-methylbutanoate = 3-methyl-2-oxobutanoate + H2O. It carries out the reaction (2R,3R)-2,3-dihydroxy-3-methylpentanoate = (S)-3-methyl-2-oxopentanoate + H2O. It participates in amino-acid biosynthesis; L-isoleucine biosynthesis; L-isoleucine from 2-oxobutanoate: step 3/4. Its pathway is amino-acid biosynthesis; L-valine biosynthesis; L-valine from pyruvate: step 3/4. Its function is as follows. Functions in the biosynthesis of branched-chain amino acids. Catalyzes the dehydration of (2R,3R)-2,3-dihydroxy-3-methylpentanoate (2,3-dihydroxy-3-methylvalerate) into 2-oxo-3-methylpentanoate (2-oxo-3-methylvalerate) and of (2R)-2,3-dihydroxy-3-methylbutanoate (2,3-dihydroxyisovalerate) into 2-oxo-3-methylbutanoate (2-oxoisovalerate), the penultimate precursor to L-isoleucine and L-valine, respectively. This chain is Dihydroxy-acid dehydratase, found in Methanosphaera stadtmanae (strain ATCC 43021 / DSM 3091 / JCM 11832 / MCB-3).